Reading from the N-terminus, the 1491-residue chain is Pleckstrin homology domain-containing family H member 2 (1491 aa).

A coiled-coil region spans residues 19 to 177 (ALEAQLMKFR…ELQEKKISCV (159 aa)). Disordered stretches follow at residues 232-435 (AEKP…PFQP), 506-546 (DDGL…LHRF), and 612-668 (SSSP…SDYA). The segment covering 253-264 (TSCSSEQNQKTR) has biased composition (polar residues). Over residues 374–385 (KEQDSSSDELNK) the composition is skewed to basic and acidic residues. Residues 392 to 406 (LDYTSSSSEANTPSP) are compositionally biased toward polar residues. The segment covering 657–666 (SDSSAASESD) has biased composition (low complexity). PH domains follow at residues 702–796 (PLEK…SVLR) and 810–918 (KPAV…VAAG). The MyTH4 domain occupies 954–1109 (HSKEGILSPL…PSRMEILSTL (156 aa)). The 330-residue stretch at 1120-1449 (FSIPVHFMNG…SYINSFHQQK (330 aa)) folds into the FERM domain. Residues 1466–1491 (QAPQARVMGSQPPLSNSRPTKGPTLL) form a disordered region.

As to quaternary structure, self-associates. Interacts with TGFB1I1. In terms of tissue distribution, expressed in the kidney and testis. Expressed in the kidney exclusively by glomerular podocytes.

It is found in the cytoplasm. It localises to the cytoskeleton. The protein localises to the cell membrane. Its subcellular location is the cell projection. The protein resides in the lamellipodium. Its function is as follows. In the kidney glomerulus may play a role in linking podocyte foot processes to the glomerular basement membrane. May be involved in stabilization of F-actin by attenuating its depolymerization. Can recruit TGFB1I1 from focal adhesions to podocyte lamellipodia. The protein is Pleckstrin homology domain-containing family H member 2 (Plekhh2) of Mus musculus (Mouse).